The sequence spans 189 residues: MDQLQQSLLDAPIIEKNGYHYFVHPISDGLPKLDPTLLREIVIRIIRKAELQDVDRIVTPAAMGIHISTAVSLMTDIPLTVIRKRKYGLEDEVAISQQTGYSENEMYINDVRAGERVLVLDDVLSTGGTLASVLEALDGIGAEVIDTVAVIKKVGGENKVDDAGYDVKTLINVDVVDGEVVIVDEHGDS.

This sequence belongs to the purine/pyrimidine phosphoribosyltransferase family. Archaeal HPRT subfamily.

May catalyze a purine salvage reaction, the substrate is unknown. The polypeptide is HGPRTase-like protein 1 (Natrialba magadii (strain ATCC 43099 / DSM 3394 / CCM 3739 / CIP 104546 / IAM 13178 / JCM 8861 / NBRC 102185 / NCIMB 2190 / MS3) (Natronobacterium magadii)).